A 238-amino-acid polypeptide reads, in one-letter code: Ras association domain-containing protein 3 (238 aa).

N-acetylserine is present on Ser-2. The segment at Arg-26–Tyr-48 is disordered. Over residues Asp-38–Tyr-48 the composition is skewed to basic and acidic residues. Residues Tyr-79–Glu-186 form the Ras-associating domain. In terms of domain architecture, SARAH spans Ile-187–Val-234.

As to expression, widely expressed.

The protein resides in the cytoplasm. Its subcellular location is the cytoskeleton. This Homo sapiens (Human) protein is Ras association domain-containing protein 3 (RASSF3).